A 1256-amino-acid polypeptide reads, in one-letter code: Cohesin subunit SA-3 (1256 aa).

Residues 1 to 22 (MPTLWSPSTQHHGSSSGSMSSP) show a composition bias toward low complexity. The disordered stretch occupies residues 1-110 (MPTLWSPSTQ…GGNDKNKSVP (110 aa)). The segment covering 72–83 (RNVRKRAAKRPP) has biased composition (basic residues). The SCD domain maps to 324-409 (FVHRYRDILP…NRFKDRMVSM (86 aa)). 2 disordered regions span residues 1096-1169 (RRLQ…GPEL) and 1230-1256 (KLLH…MEDF). The segment covering 1113–1125 (NSGPTTPTLTSTA) has biased composition (polar residues). Residues 1126–1140 (VKRRQSPRTVGKRQK) are compositionally biased toward basic residues. Pro residues predominate over residues 1144 to 1166 (GPGPGPGPGPGPGPGPGPGPGPG). Position 1234 is a phosphoserine (serine 1234).

This sequence belongs to the SCC3 family. In terms of assembly, component of the meiosis-specific cohesin complex, which also contains the SMC1 (SMC1A or SMC1B) and SMC3 heterodimer. Such complex likely contains RAD21, or the meiosis-specific related protein REC8. Interacts with CCDC79/TERB1; recruiting cohesin to telomeres to develop structural rigidity. Phosphorylated. Testis specific.

It localises to the nucleus. The protein localises to the chromosome. Meiosis specific component of cohesin complex. The cohesin complex is required for the cohesion of sister chromatids after DNA replication. The cohesin complex apparently forms a large proteinaceous ring within which sister chromatids can be trapped. At anaphase, the complex is cleaved and dissociates from chromatin, allowing sister chromatids to segregate. The meiosis-specific cohesin complex probably replaces mitosis specific cohesin complex when it dissociates from chromatin during prophase I. The chain is Cohesin subunit SA-3 (Stag3) from Rattus norvegicus (Rat).